Here is a 41-residue protein sequence, read N- to C-terminus: Photosystem I reaction center subunit IX (41 aa).

A helical transmembrane segment spans residues 7-27 (YLSVAPVLSTLWFGALAGLLI).

It belongs to the PsaJ family.

It localises to the plastid. The protein resides in the chloroplast thylakoid membrane. Its function is as follows. May help in the organization of the PsaE and PsaF subunits. The protein is Photosystem I reaction center subunit IX of Jasminum nudiflorum (Winter jasmine).